Here is a 526-residue protein sequence, read N- to C-terminus: Peptide chain release factor 3 (526 aa).

Residues 8-277 enclose the tr-type G domain; sequence GKRRTFAIIS…GLTDWAPAPQ (270 aa). Residues 17-24, 85-89, and 139-142 each bind GTP; these read SHPDAGKT, DTPGH, and NKLD.

The protein belongs to the TRAFAC class translation factor GTPase superfamily. Classic translation factor GTPase family. PrfC subfamily.

Its subcellular location is the cytoplasm. In terms of biological role, increases the formation of ribosomal termination complexes and stimulates activities of RF-1 and RF-2. It binds guanine nucleotides and has strong preference for UGA stop codons. It may interact directly with the ribosome. The stimulation of RF-1 and RF-2 is significantly reduced by GTP and GDP, but not by GMP. In Aliivibrio fischeri (strain ATCC 700601 / ES114) (Vibrio fischeri), this protein is Peptide chain release factor 3.